The following is a 469-amino-acid chain: Adenosylhomocysteinase (469 aa).

Residues threonine 63, aspartate 139, and glutamate 164 each coordinate substrate. Residue 165–167 (TTT) coordinates NAD(+). Substrate is bound by residues lysine 194 and aspartate 198. NAD(+) contacts are provided by residues asparagine 199, 228–233 (GYGDVG), glutamate 251, asparagine 300, 321–323 (IGH), and asparagine 375.

The protein belongs to the adenosylhomocysteinase family. NAD(+) is required as a cofactor.

The protein localises to the cytoplasm. The enzyme catalyses S-adenosyl-L-homocysteine + H2O = L-homocysteine + adenosine. It functions in the pathway amino-acid biosynthesis; L-homocysteine biosynthesis; L-homocysteine from S-adenosyl-L-homocysteine: step 1/1. In terms of biological role, may play a key role in the regulation of the intracellular concentration of adenosylhomocysteine. This Pseudomonas entomophila (strain L48) protein is Adenosylhomocysteinase.